The primary structure comprises 994 residues: Bifunctional glutamine synthetase adenylyltransferase/adenylyl-removing enzyme (994 aa).

The segment at 1–487 is adenylyl removase; the sequence is MVVTKLATQR…LHTKLFYQPL (487 aa). The adenylyl transferase stretch occupies residues 492–994; it reads GPTGLEIAHG…KAVVRKVFGS (503 aa).

The protein belongs to the GlnE family. Mg(2+) is required as a cofactor.

It catalyses the reaction [glutamine synthetase]-O(4)-(5'-adenylyl)-L-tyrosine + phosphate = [glutamine synthetase]-L-tyrosine + ADP. The catalysed reaction is [glutamine synthetase]-L-tyrosine + ATP = [glutamine synthetase]-O(4)-(5'-adenylyl)-L-tyrosine + diphosphate. Involved in the regulation of glutamine synthetase GlnA, a key enzyme in the process to assimilate ammonia. When cellular nitrogen levels are high, the C-terminal adenylyl transferase (AT) inactivates GlnA by covalent transfer of an adenylyl group from ATP to specific tyrosine residue of GlnA, thus reducing its activity. Conversely, when nitrogen levels are low, the N-terminal adenylyl removase (AR) activates GlnA by removing the adenylyl group by phosphorolysis, increasing its activity. The regulatory region of GlnE binds the signal transduction protein PII (GlnB) which indicates the nitrogen status of the cell. This Mycobacterium bovis (strain ATCC BAA-935 / AF2122/97) protein is Bifunctional glutamine synthetase adenylyltransferase/adenylyl-removing enzyme.